A 211-amino-acid chain; its full sequence is Large ribosomal subunit protein bL25 (211 aa).

Positions 1–18 (MAKTHEIKAERRADEGKG) are enriched in basic and acidic residues. Residues 1-20 (MAKTHEIKAERRADEGKGAS) are disordered.

Belongs to the bacterial ribosomal protein bL25 family. CTC subfamily. Part of the 50S ribosomal subunit; part of the 5S rRNA/L5/L18/L25 subcomplex. Contacts the 5S rRNA. Binds to the 5S rRNA independently of L5 and L18.

This is one of the proteins that binds to the 5S RNA in the ribosome where it forms part of the central protuberance. The protein is Large ribosomal subunit protein bL25 of Xanthomonas oryzae pv. oryzae (strain MAFF 311018).